The sequence spans 172 residues: Keratin, high-sulfur matrix protein, B2A (172 aa).

Ala-2 carries the N-acetylalanine modification. 5 consecutive repeats follow at residues Pro-27 to Gln-36, Pro-37 to Gln-46, Pro-47 to Gln-56, Pro-57 to Gln-66, and Pro-67 to Glu-76.

In terms of biological role, the keratin products of mammalian epidermal derivatives such as wool and hair consist of microfibrils embedded in a rigid matrix of other proteins. The matrix proteins include the high-sulfur and high-tyrosine keratins, having molecular weights of 6-20 kDa, whereas the microfibrils contain the larger, low-sulfur keratins (40-56 kDa). The polypeptide is Keratin, high-sulfur matrix protein, B2A (Ovis aries (Sheep)).